Reading from the N-terminus, the 333-residue chain is Low specificity L-threonine aldolase (333 aa).

Lys197 is modified (N6-(pyridoxal phosphate)lysine).

Belongs to the threonine aldolase family. As to quaternary structure, homotetramer. Requires pyridoxal 5'-phosphate as cofactor.

The catalysed reaction is L-threonine = acetaldehyde + glycine. It catalyses the reaction L-allo-threonine = acetaldehyde + glycine. Functionally, catalyzes the cleavage of L-allo-threonine and L-threonine to glycine and acetaldehyde. L-threo-phenylserine and L-erythro-phenylserine are also good substrates. The sequence is that of Low specificity L-threonine aldolase (ltaE) from Escherichia coli O157:H7.